Here is an 857-residue protein sequence, read N- to C-terminus: A-kinase anchor protein 1, mitochondrial (857 aa).

The transit peptide at 1-29 directs the protein to the mitochondrion; the sequence is MAIQLRSLFPLALPGMLALLGWWWFFSRK. Ser55 bears the Phosphoserine mark. Residues 65–121 are disordered; it reads VAPTVTQPPGREEQRCVDKPSTEPLALPRTRQVRRRSESSGNLPSVADTRSQPGPCR. Basic and acidic residues predominate over residues 74 to 85; that stretch reads GREEQRCVDKPS. A phosphoserine mark is found at Ser101, Ser103, and Ser164. Over residues 103–116 the composition is skewed to polar residues; sequence SSGNLPSVADTRSQ. 2 disordered regions span residues 165 to 198 and 260 to 303; these read ALGK…GDAV and FVEP…VPEN. Residues 286 to 299 are compositionally biased toward basic and acidic residues; that stretch reads SDRDLAGELDKDET. Residues 306 to 319 are PKA-RII subunit binding domain; it reads IKQAAFQLISQVIL. Disordered regions lie at residues 336 to 437, 466 to 497, and 512 to 554; these read QVHP…NPRG, STSG…TQPF, and EDGW…QAGS. Residues 354-379 are compositionally biased toward polar residues; the sequence is PASQETSLGQDTSDPASTRTGATASP. Position 401 is a phosphothreonine (Thr401). Residues 466–482 show a composition bias toward polar residues; the sequence is STSGLEDSCTETISSSG. Thr487 bears the Phosphothreonine mark. A phosphoserine mark is found at Ser527 and Ser546. The segment covering 545 to 554 has biased composition (polar residues); it reads DSPQSVQAGS. The KH domain occupies 561–625; the sequence is LIIWEIEVPK…HHVDKALNLI (65 aa). Residues 712-771 form the Tudor domain; it reads PVEITVICAAPGADGAWWRAQVVASYEETNEVEIRYVDYGGYKRVKVDVLRQIRSDFVTL.

In terms of assembly, interacts with SLC8A3. Interacts with CFAP91. Interacts with CLPB. Interacts with NDUFS1. In terms of tissue distribution, highest expression in testis, heart, liver, skeletal muscle, intestine and kidney, followed by brain and lung. No expression in spleen. Isoform 1/D-AKAP1A is expressed predominantly in testis whereas isoform 4/D-AKAP1D is expressed primarily in liver. Expression is decreased in hearts of diabetic mice (at protein level).

Its subcellular location is the mitochondrion outer membrane. The protein resides in the mitochondrion. It localises to the endoplasmic reticulum. In terms of biological role, differentially targeted protein that binds to type I and II regulatory subunits of protein kinase A. Anchors them to the cytoplasmic face of the mitochondrial outer membrane or allows them to reside in the endoplasmic reticulum. Involved in mitochondrial-mediated antiviral innate immunity. Promotes translocation of NDUFS1 into mitochondria to regulate mitochondrial membrane respiratory chain NADH dehydrogenase (Complex I) activity. Under diabetic conditions, myocardial AKAP1 expression decreases which blocks the translocation of NDUFS1 from the cytosol to mitochondria. Reduction of NDUFS1 in mitochondria decreases ATP production and increases mitochondrial ROS level, which causes mitochondrial dysfunction and cell apoptosis, respectively, thereby leading to cardiac dysfunction. The chain is A-kinase anchor protein 1, mitochondrial from Mus musculus (Mouse).